Consider the following 84-residue polypeptide: Large ribosomal subunit protein eL34 (84 aa).

The protein belongs to the eukaryotic ribosomal protein eL34 family.

In Pyrobaculum islandicum (strain DSM 4184 / JCM 9189 / GEO3), this protein is Large ribosomal subunit protein eL34.